A 240-amino-acid polypeptide reads, in one-letter code: Probable transcriptional regulatory protein Csal_0810 (240 aa).

This sequence belongs to the TACO1 family.

The protein localises to the cytoplasm. This Chromohalobacter salexigens (strain ATCC BAA-138 / DSM 3043 / CIP 106854 / NCIMB 13768 / 1H11) protein is Probable transcriptional regulatory protein Csal_0810.